Consider the following 1235-residue polypeptide: ATP-dependent DNA helicase mph1 (1235 aa).

Disordered regions lie at residues 20–78 and 96–148; these read LTQA…YRIH and DEMP…VHSP. Residues 61–72 are compositionally biased toward basic and acidic residues; it reads SRSDNDEADEKK. Polar residues predominate over residues 137-148; the sequence is AKTQKQNIVHSP. The 169-residue stretch at 272–440 folds into the Helicase ATP-binding domain; that stretch reads IVHKGLFNNL…EVIDNLEIAE (169 aa). 285 to 292 serves as a coordination point for ATP; it reads LPTGLGKT. Positions 388–391 match the DEAH box motif; that stretch reads DEAH. The Helicase C-terminal domain occupies 608 to 784; sequence KLTYLCDTVL…GSRFTFRHDL (177 aa). Disordered stretches follow at residues 808–827, 944–1117, and 1144–1235; these read NTQDPSLPEPKRRAKPRKKL, SRLQ…PPLM, and TGAK…DSDE. The span at 947–958 shows a compositional bias: basic and acidic residues; sequence QRPEDRDNKPYG. Positions 1015-1027 are enriched in basic residues; the sequence is VAPKKAKPRRGRA. Residues 1065–1074 show a composition bias toward basic and acidic residues; it reads PGERVDRTSD. A compositionally biased stretch (acidic residues) spans 1075–1085; that stretch reads MEELEADDDSD. Polar residues-rich tracts occupy residues 1095 to 1114 and 1146 to 1159; these read PTQTQTQIPLTGTSNFSSSP and AKNSSFKNGTMTQE. The segment covering 1160 to 1170 has biased composition (low complexity); it reads SSDGGDSMDSD. Polar residues predominate over residues 1194-1209; the sequence is PSSSVFSSGQKATPNM.

The protein belongs to the DEAD box helicase family. DEAH subfamily. FANCM sub-subfamily. As to quaternary structure, interacts with the MHF histone-fold complex to form the FANCM-MHF complex.

It is found in the nucleus. The enzyme catalyses ATP + H2O = ADP + phosphate + H(+). In terms of biological role, ATP-dependent DNA helicase involved in DNA damage repair by homologous recombination and in genome maintenance. Capable of unwinding D-loops. Plays a role in limiting crossover recombinants during mitotic DNA double-strand break (DSB) repair. Component of a FANCM-MHF complex which promotes gene conversion at blocked replication forks, probably by reversal of the stalled fork. This Sclerotinia sclerotiorum (strain ATCC 18683 / 1980 / Ss-1) (White mold) protein is ATP-dependent DNA helicase mph1.